Consider the following 468-residue polypeptide: 3-isopropylmalate dehydratase large subunit (468 aa).

3 residues coordinate [4Fe-4S] cluster: cysteine 349, cysteine 409, and cysteine 412.

It belongs to the aconitase/IPM isomerase family. LeuC type 1 subfamily. In terms of assembly, heterodimer of LeuC and LeuD. It depends on [4Fe-4S] cluster as a cofactor.

The catalysed reaction is (2R,3S)-3-isopropylmalate = (2S)-2-isopropylmalate. Its pathway is amino-acid biosynthesis; L-leucine biosynthesis; L-leucine from 3-methyl-2-oxobutanoate: step 2/4. Its function is as follows. Catalyzes the isomerization between 2-isopropylmalate and 3-isopropylmalate, via the formation of 2-isopropylmaleate. The sequence is that of 3-isopropylmalate dehydratase large subunit from Nitrobacter hamburgensis (strain DSM 10229 / NCIMB 13809 / X14).